A 663-amino-acid polypeptide reads, in one-letter code: Probable potassium transport system protein Kup (663 aa).

The tract at residues 1-23 is disordered; that stretch reads MSDNPSSRAGPEVVPTPPPSPAA. 12 helical membrane-spanning segments follow: residues 81–101, 137–157, 173–193, 201–221, 224–244, 248–268, 283–303, 315–335, 373–393, 399–419, 433–453, and 455–475; these read PANVLGVLSLVFWAMTFVVTF, LLIILGLFGAALLYGDGVITP, PALEHWVVPVTVGILALLFFI, VGAVFGPVMLVWFLCIAILGV, ILFDATILQAVLPTHAVAFFA, WHGFLVLGGVVLVITGGEALY, WLLVAMPALMLNYMGQGAILL, LLVPGWALYPMIAVATAAAIV, IYVPEVNALLGAATIALVLGF, LAAAYGIAVTGTMAITTLLFH, AWPLTLLFLLVDLAFFGANIV, and VEEGGWFPLAAAAFVFTLLST.

It belongs to the HAK/KUP transporter (TC 2.A.72) family.

The protein resides in the cell inner membrane. It catalyses the reaction K(+)(in) + H(+)(in) = K(+)(out) + H(+)(out). Functionally, transport of potassium into the cell. Likely operates as a K(+):H(+) symporter. This chain is Probable potassium transport system protein Kup, found in Anaeromyxobacter sp. (strain Fw109-5).